The following is a 235-amino-acid chain: Small ribosomal subunit protein uS2c (235 aa).

Belongs to the universal ribosomal protein uS2 family.

The protein resides in the plastid. Its subcellular location is the chloroplast. This is Small ribosomal subunit protein uS2c (rps2) from Huperzia lucidula (Shining clubmoss).